Consider the following 152-residue polypeptide: RxLR effector protein Avrblb1 (152 aa).

Positions 1–24 are cleaved as a signal peptide; sequence MRSLLLTVLLNLVVLLATTGAVSS. The RxLR-dEER signature appears at 51-72; the sequence is RSLRGDYNNEVTKEPNTSDEER. Residues 54–56 carry the RGD RLK-binding motif motif; it reads RGD. N66 is a glycosylation site (N-linked (GlcNAc...) asparagine). Residues 99 to 152 are w motif; sequence QSKTVLRYEDKLFTALYKSGETPRSLRTKHLDKASASVFFNRFKKWYDKNVGPS.

Belongs to the RxLR effector family. Interacts with host defense protein RGA2/Rpi-blb1. Interacts with host legume-type lectin receptor kinase LECRK19.

The protein resides in the secreted. The protein localises to the host nucleus. It is found in the host nucleolus. It localises to the host cell membrane. Functionally, secreted effector that acts as an elicitor of hypersensitive response (HR) specifically on plants carrying defense protein RGA2/Rpi-blb1. Enhances P.infestans colonization of plant hosts Nicotiana benthamiana and potato Solanum bulbocastanum leaves. Associates with host legume-type lectin receptor kinases and disrupts attachments between the host plasma membrane and cell wall. The polypeptide is RxLR effector protein Avrblb1 (Phytophthora infestans (strain T30-4) (Potato late blight agent)).